The sequence spans 107 residues: UPF0102 protein Tlet_0667 (107 aa).

Belongs to the UPF0102 family.

This chain is UPF0102 protein Tlet_0667, found in Pseudothermotoga lettingae (strain ATCC BAA-301 / DSM 14385 / NBRC 107922 / TMO) (Thermotoga lettingae).